A 138-amino-acid chain; its full sequence is Large ribosomal subunit protein bL17 (138 aa).

It belongs to the bacterial ribosomal protein bL17 family. Part of the 50S ribosomal subunit. Contacts protein L32.

This is Large ribosomal subunit protein bL17 from Phenylobacterium zucineum (strain HLK1).